A 338-amino-acid chain; its full sequence is MWREEAREQLRRGRCCFAAASVVSTAKHNKSLGNCTHGSGVMTEAEGILNNVWDAVDSKQQGFIYAKDMPDLVGRFGQFLAQSLTSRANDEAIAAFASEKPFYKLDKEQFKSTFQTLVGTSLQTAVELAGHGEPRPRLFGAIRRASATGDEQAREELERKSAELSRVRDELDEWKSKYQFLEREFLFYQTHHENSVDSTQHEFIISEMKRTIEEQTRMIGQLRRQVQGGTQVLARAGKRASPVDVFMYVSRQGLLLLMRMPKAAFLLLLLGYFVWYTVMGGAVQGPDPSVALPEPPKQPWWEQNNIISALYWYLTDTFEPSQRINDTVNDNYNSLFGL.

Residues 149 to 228 adopt a coiled-coil conformation; it reads GDEQAREELE…IGQLRRQVQG (80 aa). The helical transmembrane segment at 263–283 threads the bilayer; sequence AAFLLLLLGYFVWYTVMGGAV.

The protein belongs to the MPS2 family.

Its subcellular location is the nucleus membrane. The protein localises to the cytoplasm. It is found in the cytoskeleton. The protein resides in the microtubule organizing center. It localises to the spindle pole body. Its function is as follows. Component of the spindle pole body (SPB) required for insertion of the nascent SPB into the nuclear envelope and for the proper execution of spindle pole body (SPB) duplication. The sequence is that of Monopolar spindle protein 2 (MPS2) from Eremothecium gossypii (strain ATCC 10895 / CBS 109.51 / FGSC 9923 / NRRL Y-1056) (Yeast).